The primary structure comprises 339 residues: Dual specificity protein phosphatase 12 (339 aa).

Met-1 is subject to N-acetylmethionine. Residues 1-22 show a composition bias toward polar residues; sequence MLEVQSSNHGCERQAPTTSPAS. The interval 1–25 is disordered; the sequence is MLEVQSSNHGCERQAPTTSPASSAG. Positions 26-170 constitute a Tyrosine-protein phosphatase domain; that stretch reads HAVEVRPGLY…LKLYEAMGHE (145 aa). Cys-114 serves as the catalytic Phosphocysteine intermediate. 115–120 contributes to the substrate binding site; the sequence is HAGVSR. Residue Ser-334 is modified to Phosphoserine.

The protein belongs to the protein-tyrosine phosphatase family. Non-receptor class dual specificity subfamily. In terms of assembly, monomer. The cofactor is Zn(2+).

The protein localises to the nucleus. It is found in the cytoplasm. The protein resides in the cytosol. It carries out the reaction O-phospho-L-tyrosyl-[protein] + H2O = L-tyrosyl-[protein] + phosphate. The enzyme catalyses O-phospho-L-seryl-[protein] + H2O = L-seryl-[protein] + phosphate. The catalysed reaction is O-phospho-L-threonyl-[protein] + H2O = L-threonyl-[protein] + phosphate. In terms of biological role, dual specificity phosphatase; can dephosphorylate both phosphotyrosine and phosphoserine or phosphothreonine residues. Can dephosphorylate glucokinase (in vitro). Has phosphatase activity with the synthetic substrate 6,8-difluoro-4-methylumbelliferyl phosphate and other in vitro substrates. This Rattus norvegicus (Rat) protein is Dual specificity protein phosphatase 12 (Dusp12).